We begin with the raw amino-acid sequence, 927 residues long: MPANGNSHAYFNIDEVRSKNVLKQITQLINEVTNITETFPLKPGQTTEGLVATLDAAVANFLQTGSFAISKCPIANSDPRAIDLLHEALGAVQDTGQVMIQTGRDFVRDSTSTNKRAIATNSGRNLLTAVAKFLILADSIDVKVIVDKVDEVRETAHQMIEADTKIKVDDLYNLLISQIEELDITVRRRAIDLVKPNQRDDLLAARSALRQTAPLLYTSTRTFVRHPEHEEARRNRDYTADEMHSALNALESVLNGQQPKVTFSEYGRIGDLINEIDTFQNRIEIDPAHYRRGTDRPDLEGHCERIVSGSASIADAESTRENRKQKIVAECNNLRQALQELLTEYEKSTGRRDDNDDIPLGIAEVHKRTKDLRRHLRRAIVDHISDAFLDTRTPLILLIEAAKEGHEENTRYRSKMFQEHANEIVSVARLSCQLSSDVESVSVIQHTAAQLEKLAPQVAQAAILLCHQPTSKTAQENMETYKNAWFDKVRLLTTALDNITTLDDFLAVSEAHIVEDCERGIKGITANASTPDENAANCETVDCAAGSIRGRALRVCDVVDAEMDFLQNSEYTETVKQAVRILKTQRVDQFAERASALANRQEAHGLTWDPKTKEEEMNEFINACTLVHDAVKDIRHALLMNRSMNDVDSDVEYEADGVGAANADANRTISEQENQQNLMRRLPEEEKKKIQAQIDIFKVTQTRFEREVAKWDETGNDIISLANNMCKIMMSMTEFTRGCGPLKTTMDVIRAAQEISLNGSKLNALARQIGEESADSQTKKDLLAYLSQITLYCQQLNICSKVKADVTQVGNELVVSALDSAMSLIQTARNLLTAVVQTVKAAYIASTKFRRPNANSVRVEWRMAPPKKQPLIRPQKNNAIIRRASERRPLQPAKVLAEFTRNEIETGRDSDDEELDRRHQQRINGRL.

Coiled-coil stretches lie at residues 319–354 and 672–696; these read TREN…RRDD and QENQ…QIDI. The tract at residues 901–927 is disordered; sequence RNEIETGRDSDDEELDRRHQQRINGRL.

It belongs to the vinculin/alpha-catenin family. As to quaternary structure, component of a core catenin-cadherin complex consisting of hmr-1, hmp-1 and hmp-2; the complex localizes to adherens junctions. May interact with hmp-2. Epidermal cells.

The protein localises to the cell junction. Its subcellular location is the adherens junction. It is found in the cytoplasm. In terms of biological role, required for cell migration during body enclosure and cell shape changes during body elongation. Required for proper localization of other junctional components, such as pac-1. In Caenorhabditis elegans, this protein is Alpha-catenin-like protein hmp-1 (hmp-1).